The sequence spans 495 residues: Cytochrome P450 2B15 (495 aa).

Position 129 is a phosphoserine; by PKA (Ser129). Cys437 serves as a coordination point for heme.

It belongs to the cytochrome P450 family. Heme is required as a cofactor.

The protein localises to the endoplasmic reticulum membrane. Its subcellular location is the microsome membrane. It carries out the reaction an organic molecule + reduced [NADPH--hemoprotein reductase] + O2 = an alcohol + oxidized [NADPH--hemoprotein reductase] + H2O + H(+). In terms of biological role, cytochromes P450 are a group of heme-thiolate monooxygenases. In liver microsomes, this enzyme is involved in an NADPH-dependent electron transport pathway. It oxidizes a variety of structurally unrelated compounds, including steroids, fatty acids, and xenobiotics. The protein is Cytochrome P450 2B15 (Cyp2b15) of Rattus norvegicus (Rat).